A 186-amino-acid polypeptide reads, in one-letter code: Chromosomal replication initiator protein DnaA (186 aa).

Position 1 (Glu1) is a region of interest, domain I, interacts with DnaA modulators. Glu1 is a region of interest (domain II). A domain III, AAA+ region region spans residues 1–99; it reads EFFKTFNALI…GALNKVTHTS (99 aa). The segment at 100–186 is domain IV, binds dsDNA; sequence LIGRSMTVES…GRNFGGRDHT (87 aa).

Belongs to the DnaA family. As to quaternary structure, oligomerizes as a right-handed, spiral filament on DNA at oriC.

It is found in the cytoplasm. Its function is as follows. Plays an essential role in the initiation and regulation of chromosomal replication. ATP-DnaA binds to the origin of replication (oriC) to initiate formation of the DNA replication initiation complex once per cell cycle. Binds the DnaA box (a 9 base pair repeat at the origin) and separates the double-stranded (ds)DNA. Forms a right-handed helical filament on oriC DNA; dsDNA binds to the exterior of the filament while single-stranded (ss)DNA is stabiized in the filament's interior. The ATP-DnaA-oriC complex binds and stabilizes one strand of the AT-rich DNA unwinding element (DUE), permitting loading of DNA polymerase. After initiation quickly degrades to an ADP-DnaA complex that is not apt for DNA replication. Binds acidic phospholipids. This chain is Chromosomal replication initiator protein DnaA, found in Wolbachia sp.